Here is a 767-residue protein sequence, read N- to C-terminus: MATYLEFIQQNEERDGVRFSWNVWPSSRLEATRMVVPLACLLTPLKERPDLPPVQYEPVLCSRPTCKAILNPLCQVDYRAKLWACNFCFQRNQFPPAYAGISEVNQPAELMPQFSTIEYMIQRGARSPLIFLYVVDTCLEEDDLQALKESLQMSLSLLPPDALVGLITFGRMVQVHELSCEGISKSYVFRGTKDLTAKQIQEMLGLTKSAMPVQQARPAQPQEQPFVSSRFLQPIHKIDMNLTDLLGELQRDPWPVTQGKRPLRSTGVALSIAVGLLEGTFPNTGARIMLFTGGPPTQGPGMVVGDELKTPIRSWHDIEKDNARFMKKATKHYEMLANRTATNGHCIDIYACALDQTGLLEMKCCPNLTGGHMVMGDSFNTSLFKQTFQRIFSKDFNGDFRMAFGATLDVKTSRELKIAGAIGPCVSLNVKGPCVSENELGVGGTSQWKICGLDPSSTLGIYFEVVNQHNAPVPQGGRGAIQFVTQYQHSSTQKRIRVTTIARNWADAQSQLRHIEAAFDQEAAAVLMARLGVFRAESEEGPDVLRWLDRQLIRLCQKFGQYNKEDPTSFRLSDSFSLYPQFMFHLRRSPFLQVFNNSPDESSYYRHHFARQDLTQSLIMIQPILYSYSFHGPPEPVLLDSSSILADRILLMDTFFQIVIYLGETIAQWRKAGYQDMPEYENFKHLLQAPLDDAQEILQARFPMPRYINTEHGGSQARFLLSKVNPSQTHNNLYAWGQETGAPILTDDVSLQVFMDHLKKLAVSSAS.

N-acetylalanine is present on alanine 2. Zn(2+) is bound by residues cysteine 61, cysteine 66, cysteine 85, and cysteine 88. Lysine 564 bears the N6-acetyllysine mark. The Gelsolin-like repeat unit spans residues 634–720 (PEPVLLDSSS…EHGGSQARFL (87 aa)).

This sequence belongs to the SEC23/SEC24 family. SEC23 subfamily. COPII is composed of at least five proteins: the Sec23/24 complex, the Sec13/31 complex and Sar1. Interacts with SAR1A.

The protein localises to the cytoplasmic vesicle. The protein resides in the COPII-coated vesicle membrane. It localises to the endoplasmic reticulum membrane. It is found in the cytoplasm. Its subcellular location is the cytosol. Its function is as follows. Component of the coat protein complex II (COPII) which promotes the formation of transport vesicles from the endoplasmic reticulum (ER). The coat has two main functions, the physical deformation of the endoplasmic reticulum membrane into vesicles and the selection of cargo molecules for their transport to the Golgi complex. The protein is Protein transport protein Sec23B of Mus musculus (Mouse).